A 271-amino-acid polypeptide reads, in one-letter code: Mannosyl-3-phosphoglycerate phosphatase (271 aa).

The active-site Nucleophile is D13. D13, D15, and D214 together coordinate Mg(2+).

It belongs to the HAD-like hydrolase superfamily. MPGP family. The cofactor is Mg(2+).

Its subcellular location is the cytoplasm. It catalyses the reaction 2-O-(alpha-D-mannosyl)-3-phosphoglycerate + H2O = (2R)-2-O-(alpha-D-mannosyl)-glycerate + phosphate. The protein is Mannosyl-3-phosphoglycerate phosphatase (yedP) of Escherichia coli O157:H7.